The sequence spans 464 residues: Argininosuccinate lyase (464 aa).

The protein belongs to the lyase 1 family. Argininosuccinate lyase subfamily.

The protein resides in the cytoplasm. It catalyses the reaction 2-(N(omega)-L-arginino)succinate = fumarate + L-arginine. It functions in the pathway amino-acid biosynthesis; L-arginine biosynthesis; L-arginine from L-ornithine and carbamoyl phosphate: step 3/3. This Desulfotalea psychrophila (strain LSv54 / DSM 12343) protein is Argininosuccinate lyase.